A 237-amino-acid polypeptide reads, in one-letter code: Putative N-acetylmannosamine-6-phosphate 2-epimerase (237 aa).

This sequence belongs to the NanE family.

It catalyses the reaction an N-acyl-D-glucosamine 6-phosphate = an N-acyl-D-mannosamine 6-phosphate. It functions in the pathway amino-sugar metabolism; N-acetylneuraminate degradation; D-fructose 6-phosphate from N-acetylneuraminate: step 3/5. Converts N-acetylmannosamine-6-phosphate (ManNAc-6-P) to N-acetylglucosamine-6-phosphate (GlcNAc-6-P). This Caldanaerobacter subterraneus subsp. tengcongensis (strain DSM 15242 / JCM 11007 / NBRC 100824 / MB4) (Thermoanaerobacter tengcongensis) protein is Putative N-acetylmannosamine-6-phosphate 2-epimerase.